The primary structure comprises 129 residues: Large-conductance mechanosensitive channel (129 aa).

2 consecutive transmembrane segments (helical) span residues 10–30 and 76–96; these read FAVKGNVVDMAVGVIIGGAFG and GAFIQNVFDFLIIAIAVFGMV.

It belongs to the MscL family. As to quaternary structure, homopentamer.

Its subcellular location is the cell inner membrane. Functionally, channel that opens in response to stretch forces in the membrane lipid bilayer. May participate in the regulation of osmotic pressure changes within the cell. This is Large-conductance mechanosensitive channel from Actinobacillus pleuropneumoniae serotype 5b (strain L20).